Reading from the N-terminus, the 1035-residue chain is Putative protein FAM47C (1035 aa).

2 disordered regions span residues 1–21 (MGDQRPQDRPSSPGMDSTPWY) and 159–797 (LEDA…RRVS). The segment covering 159–173 (LEDAGSCEGQEKTTD) has biased composition (basic and acidic residues). Positions 380–392 (PEPPKTRVPPLRP) are enriched in pro residues. Over residues 478–490 (PPEKDVSHLRPEP) the composition is skewed to basic and acidic residues. Residues 533 to 544 (SLHQAPPESSVS) are compositionally biased toward polar residues. Composition is skewed to basic and acidic residues over residues 611–622 (PETRVSHLRPEP), 683–694 (PETRVSHLRPEP), and 753–766 (EPLETRVSHLRPEP).

It belongs to the FAM47 family.

This is Putative protein FAM47C (FAM47C) from Homo sapiens (Human).